A 274-amino-acid polypeptide reads, in one-letter code: Tryptophan synthase alpha chain (274 aa).

Catalysis depends on proton acceptor residues glutamate 49 and aspartate 60.

The protein belongs to the TrpA family. Tetramer of two alpha and two beta chains.

The catalysed reaction is (1S,2R)-1-C-(indol-3-yl)glycerol 3-phosphate + L-serine = D-glyceraldehyde 3-phosphate + L-tryptophan + H2O. It functions in the pathway amino-acid biosynthesis; L-tryptophan biosynthesis; L-tryptophan from chorismate: step 5/5. Functionally, the alpha subunit is responsible for the aldol cleavage of indoleglycerol phosphate to indole and glyceraldehyde 3-phosphate. This Alkalilimnicola ehrlichii (strain ATCC BAA-1101 / DSM 17681 / MLHE-1) protein is Tryptophan synthase alpha chain.